A 133-amino-acid chain; its full sequence is Methylglyoxal synthase (133 aa).

The 133-residue stretch at 1-133 (MPPKPRIALI…ARENGAAQAG (133 aa)) folds into the MGS-like domain. Substrate-binding positions include His12, Lys16, 38-41 (TGTT), and 58-59 (SG). Asp64 serves as the catalytic Proton donor/acceptor. His91 is a binding site for substrate.

It belongs to the methylglyoxal synthase family.

It carries out the reaction dihydroxyacetone phosphate = methylglyoxal + phosphate. In terms of biological role, catalyzes the formation of methylglyoxal from dihydroxyacetone phosphate. This is Methylglyoxal synthase from Cupriavidus taiwanensis (strain DSM 17343 / BCRC 17206 / CCUG 44338 / CIP 107171 / LMG 19424 / R1) (Ralstonia taiwanensis (strain LMG 19424)).